A 115-amino-acid chain; its full sequence is Large ribosomal subunit protein bL20 (115 aa).

This sequence belongs to the bacterial ribosomal protein bL20 family.

In terms of biological role, binds directly to 23S ribosomal RNA and is necessary for the in vitro assembly process of the 50S ribosomal subunit. It is not involved in the protein synthesizing functions of that subunit. The polypeptide is Large ribosomal subunit protein bL20 (Chlorobaculum parvum (strain DSM 263 / NCIMB 8327) (Chlorobium vibrioforme subsp. thiosulfatophilum)).